Consider the following 444-residue polypeptide: Exodeoxyribonuclease 7 large subunit (444 aa).

This sequence belongs to the XseA family. As to quaternary structure, heterooligomer composed of large and small subunits.

It localises to the cytoplasm. It carries out the reaction Exonucleolytic cleavage in either 5'- to 3'- or 3'- to 5'-direction to yield nucleoside 5'-phosphates.. In terms of biological role, bidirectionally degrades single-stranded DNA into large acid-insoluble oligonucleotides, which are then degraded further into small acid-soluble oligonucleotides. This is Exodeoxyribonuclease 7 large subunit from Rickettsia conorii (strain ATCC VR-613 / Malish 7).